Consider the following 131-residue polypeptide: DNA-binding protein inhibitor ID-4 (131 aa).

The bHLH domain occupies 36–88 (ARYKMEEEETLCLQYDMNDCYSRLKRLVPTIPPNKKVSKVEILQHVIDYILDL).

As to quaternary structure, heterodimer with other HLH proteins. During embryonic development, expressed in a number of neural tissues, including Rohon-Beard neurons, olfactory placode, eye primordia, and the trigeminal ganglia. Also expressed in other organs including the pronephros and liver primordium. Pronephric development begins by stage 25 and increases during tailbud stages. Expressed in both the tubules and the duct. As embryogenesis progresses, expressed in the migrating melanocytes and lateral line structures.

It localises to the nucleus. In terms of biological role, transcriptional regulator (lacking a basic DNA binding domain) which negatively regulates the basic helix-loop-helix (bHLH) transcription factors by forming heterodimers and inhibiting their DNA binding and transcriptional activity. Inhibits the activity of both neurogenic (neurog1/neurogenin, neurod1/neuroD) and myogenic (myod1/myoD) bHLH factors. This is DNA-binding protein inhibitor ID-4 from Xenopus laevis (African clawed frog).